We begin with the raw amino-acid sequence, 161 residues long: Ribosome maturation factor RimP (161 aa).

The protein belongs to the RimP family.

The protein resides in the cytoplasm. In terms of biological role, required for maturation of 30S ribosomal subunits. In Rickettsia typhi (strain ATCC VR-144 / Wilmington), this protein is Ribosome maturation factor RimP.